A 618-amino-acid chain; its full sequence is MVVVSLQCAIVGQAGSSFDVEIDDGAKVSKLKDAIKAKKPNDFKVVDADKLHLFLAKQPVEDESGKEVVPVYRPSAEEMKEENLKWLPDEHRAALKLVEGESDDYIHALTAGEPILGSKTLTTWFYTKNNMELPSSEQIHVLVVVPEQGFSVPTVSQDGVFDHCINPFFLQFRTVDKVGDWLEFSSLLPLTRRQKLYIRSSYQVIANHALFNPNVGMVKYAVVTGTPGVGKSVFVYYVLWRLIKEKKRVLLFDNNGLFYFDGSTMLICLALPSKFNEQFWSPDLWCLVDSMDPTSIPGLPYRLCSVLLASTPRRDCIGEFKKQPPTADVFYMPLWSKEELATIAPMYPHAAAVWENRFDCLGGVPRLVLQDIGTNPQALLMSACSSCSLDDCIVLASIHSGVNSKTTIVQTLIHIRSQEPYREYKVVYASDLAMQLIVRTKWQHDRAKLQSLLGSSDGNPLAQSLCGYIFEFYSMDRLEQGGTFVYRELFSKKRKRTPADGTIDIPRSSQPRQVAERVEVGQHAKQLYVPGTSNYTAIDAWMPQFGGFQMTVGKTHDIKGGAADDLAKLGQNGNRLFFLLPPLYYKTFTKKTPQTIKQYAILVPYPEVRNELSASTLQ.

Positions 1–19 (MVVVSLQCAIVGQAGSSFD) are cleaved as a signal peptide. Positions 18–57 (FDVEIDDGAKVSKLKDAIKAKKPNDFKVVDADKLHLFLAK) are LQLFLAK domain. A DWL domain region spans residues 58-139 (QPVEDESGKE…NMELPSSEQI (82 aa)). Residues 140-146 (HVLVVVP) carry the HVLVXXP motif motif. Asparagine 534 carries N-linked (GlcNAc...) asparagine glycosylation.

It belongs to the Crinkler effector family.

The protein resides in the secreted. It localises to the host nucleus. Its function is as follows. Secreted effector that elicits necrosis in host plants, a characteristic of plant innate immunity. The polypeptide is Crinkler effector protein 16 (Phytophthora infestans (Potato late blight agent)).